A 431-amino-acid polypeptide reads, in one-letter code: C4-dicarboxylate transport protein (431 aa).

8 helical membrane passes run isoleucine 8–proline 28, leucine 44–methionine 64, leucine 78–leucine 98, glycine 148–glycine 168, isoleucine 188–isoleucine 208, leucine 222–alanine 242, isoleucine 307–leucine 327, and alanine 355–isoleucine 375.

This sequence belongs to the dicarboxylate/amino acid:cation symporter (DAACS) (TC 2.A.23) family.

The protein localises to the cell inner membrane. Its function is as follows. Responsible for the transport of dicarboxylates such as succinate, fumarate, and malate from the periplasm across the membrane. This Cupriavidus pinatubonensis (strain JMP 134 / LMG 1197) (Cupriavidus necator (strain JMP 134)) protein is C4-dicarboxylate transport protein.